We begin with the raw amino-acid sequence, 819 residues long: Myosin light chain kinase 3 (819 aa).

3 disordered regions span residues 146 to 256 (VPWR…TPSE), 273 to 334 (VVSP…TPPR), and 347 to 462 (EMLM…EQDC). The residue at position 152 (Ser152) is a Phosphoserine. 2 stretches are compositionally biased toward basic and acidic residues: residues 158 to 170 (EENK…EGGK) and 183 to 196 (DARE…KADV). Residues 307-318 (GPGPQCPGPPGL) are compositionally biased toward pro residues. Phosphoserine occurs at positions 355, 401, and 408. The Protein kinase domain maps to 515–770 (VCQHEVLGGG…ATQCLKHEWL (256 aa)). ATP-binding positions include 521–529 (LGGGRFGQV) and Lys544. The active-site Proton acceptor is the Asp636.

This sequence belongs to the protein kinase superfamily. CAMK Ser/Thr protein kinase family. Mg(2+) serves as cofactor. Post-translationally, phosphorylated on serine residues. In terms of tissue distribution, restricted to heart.

The protein resides in the cytoplasm. The catalysed reaction is L-seryl-[myosin light chain] + ATP = O-phospho-L-seryl-[myosin light chain] + ADP + H(+). It carries out the reaction L-threonyl-[myosin light chain] + ATP = O-phospho-L-threonyl-[myosin light chain] + ADP + H(+). Its function is as follows. Kinase that phosphorylates MYL2 in vitro. Promotes sarcomere formation in cardiomyocytes and increases cardiomyocyte contractility. In Homo sapiens (Human), this protein is Myosin light chain kinase 3 (MYLK3).